We begin with the raw amino-acid sequence, 190 residues long: Elongation factor P (190 aa).

Belongs to the elongation factor P family.

It is found in the cytoplasm. Its pathway is protein biosynthesis; polypeptide chain elongation. Functionally, involved in peptide bond synthesis. Stimulates efficient translation and peptide-bond synthesis on native or reconstituted 70S ribosomes in vitro. Probably functions indirectly by altering the affinity of the ribosome for aminoacyl-tRNA, thus increasing their reactivity as acceptors for peptidyl transferase. In Mycoplasma pneumoniae (strain ATCC 29342 / M129 / Subtype 1) (Mycoplasmoides pneumoniae), this protein is Elongation factor P (efp).